The chain runs to 347 residues: Dihydroorotase (347 aa).

Residues histidine 14 and histidine 16 each coordinate Zn(2+). Residues 16–18 and asparagine 42 contribute to the substrate site; that span reads HLR. Zn(2+) is bound by residues lysine 100, histidine 137, and histidine 175. An N6-carboxylysine modification is found at lysine 100. Histidine 137 provides a ligand contact to substrate. Leucine 220 is a substrate binding site. Zn(2+) is bound at residue aspartate 248. Residue aspartate 248 is part of the active site. The substrate site is built by histidine 252 and alanine 264.

Belongs to the metallo-dependent hydrolases superfamily. DHOase family. Class II DHOase subfamily. As to quaternary structure, homodimer. Zn(2+) is required as a cofactor.

It carries out the reaction (S)-dihydroorotate + H2O = N-carbamoyl-L-aspartate + H(+). It participates in pyrimidine metabolism; UMP biosynthesis via de novo pathway; (S)-dihydroorotate from bicarbonate: step 3/3. Functionally, catalyzes the reversible cyclization of carbamoyl aspartate to dihydroorotate. This is Dihydroorotase from Pseudomonas syringae pv. tomato (strain ATCC BAA-871 / DC3000).